The chain runs to 966 residues: Leucine--tRNA ligase (966 aa).

The 'HIGH' region motif lies at Pro71–His82. The interval Tyr561–Ser580 is disordered. Positions Ala571–Ser580 are enriched in basic and acidic residues. The 'KMSKS' region signature appears at Lys734 to Ser738. ATP is bound at residue Lys737.

Belongs to the class-I aminoacyl-tRNA synthetase family.

It localises to the cytoplasm. It carries out the reaction tRNA(Leu) + L-leucine + ATP = L-leucyl-tRNA(Leu) + AMP + diphosphate. The polypeptide is Leucine--tRNA ligase (Streptomyces coelicolor (strain ATCC BAA-471 / A3(2) / M145)).